Here is a 451-residue protein sequence, read N- to C-terminus: Phosphoglucosamine mutase (451 aa).

S102 functions as the Phosphoserine intermediate in the catalytic mechanism. 4 residues coordinate Mg(2+): S102, D243, D245, and D247. S102 is subject to Phosphoserine.

Belongs to the phosphohexose mutase family. Requires Mg(2+) as cofactor. Post-translationally, activated by phosphorylation.

The catalysed reaction is alpha-D-glucosamine 1-phosphate = D-glucosamine 6-phosphate. In terms of biological role, catalyzes the conversion of glucosamine-6-phosphate to glucosamine-1-phosphate. The polypeptide is Phosphoglucosamine mutase (Chelativorans sp. (strain BNC1)).